A 248-amino-acid chain; its full sequence is Tetraspanin-17 (248 aa).

Residues 1 to 7 lie on the Cytoplasmic side of the membrane; that stretch reads MSEVRTG. A helical transmembrane segment spans residues 8 to 28; sequence FLTMTTIILISIGLTMMGTGL. The Extracellular portion of the chain corresponds to 29 to 44; the sequence is YQKTTMSSCIRETSSQ. A helical transmembrane segment spans residues 45–65; that stretch reads FTLLGLLLLLIPQIGLYGICC. Residues 66–69 lie on the Cytoplasmic side of the membrane; it reads RSKR. A helical membrane pass occupies residues 70 to 90; that stretch reads LFNFFFYGMVVLIIIVSYYSI. Over 91 to 210 the chain is Extracellular; it reads KCSIYNTTFG…ILKAIVHQWK (120 aa). Residues Asn-96, Asn-109, and Asn-141 are each glycosylated (N-linked (GlcNAc...) asparagine). The helical transmembrane segment at 211-231 threads the bilayer; it reads YLSMFAYPALVLSCISLAIAW. Topologically, residues 232–248 are cytoplasmic; the sequence is SLKETIHENEDYRGSYS.

Belongs to the tetraspanin (TM4SF) family.

It is found in the membrane. Its function is as follows. May be involved in the regulation of cell differentiation. In Arabidopsis thaliana (Mouse-ear cress), this protein is Tetraspanin-17 (TET17).